A 177-amino-acid polypeptide reads, in one-letter code: Large ribosomal subunit protein uL6 (177 aa).

Belongs to the universal ribosomal protein uL6 family. Part of the 50S ribosomal subunit.

Functionally, this protein binds to the 23S rRNA, and is important in its secondary structure. It is located near the subunit interface in the base of the L7/L12 stalk, and near the tRNA binding site of the peptidyltransferase center. The protein is Large ribosomal subunit protein uL6 of Aeromonas hydrophila subsp. hydrophila (strain ATCC 7966 / DSM 30187 / BCRC 13018 / CCUG 14551 / JCM 1027 / KCTC 2358 / NCIMB 9240 / NCTC 8049).